We begin with the raw amino-acid sequence, 173 residues long: Fimbrial protein PrsE (173 aa).

The signal sequence occupies residues 1–24; sequence MKKIRGLCLPVMLGAVLMSQHVHA.

It localises to the secreted. The protein localises to the fimbrium. In terms of biological role, fimbriae (also called pili), polar filaments radiating from the surface of the bacterium to a length of 0.5-1.5 micrometers and numbering 100-300 per cell, enable bacteria to colonize the epithelium of specific host organs. The polypeptide is Fimbrial protein PrsE (prsE) (Escherichia coli).